We begin with the raw amino-acid sequence, 70 residues long: DNA-directed RNA polymerase subunit epsilon (70 aa).

Belongs to the RNA polymerase subunit epsilon family. RNAP is composed of a core of 2 alpha, a beta and a beta' subunit. The core is associated with a delta subunit, and at least one of epsilon or omega. When a sigma factor is associated with the core the holoenzyme is formed, which can initiate transcription.

It catalyses the reaction RNA(n) + a ribonucleoside 5'-triphosphate = RNA(n+1) + diphosphate. In terms of biological role, a non-essential component of RNA polymerase (RNAP). The sequence is that of DNA-directed RNA polymerase subunit epsilon from Bacillus mycoides (strain KBAB4) (Bacillus weihenstephanensis).